The following is a 457-amino-acid chain: Multidrug resistance protein MdtK (457 aa).

12 consecutive transmembrane segments (helical) span residues 11–31, 53–73, 93–113, 127–147, 160–180, 189–209, 243–263, 276–296, 314–334, 350–370, 387–407, and 418–438; these read LLALAIPVILAQIAQTAMGFV, IWLPAILFGHGLLLALTPVIA, WLAGFVSVLIMLVLWNAGYII, AVGYLRALLWGAPGYLFFQVA, GMVMGFIGLLVNIPVNYIFIY, GGVGCGVATAAVYWVMFLAMV, LPIALALFFEVTLFAVVALLV, IALNFSSLMFVLPMSLAAAVT, AARTGLMVGVCMATLTAIFTV, VVTLAAHLMLLAAVYQISDSI, IFYITFTAYWVLGLPSGYILA, and PAGFWIGFIIGLTSAAIMMML.

The protein belongs to the multi antimicrobial extrusion (MATE) (TC 2.A.66.1) family. MdtK subfamily.

It is found in the cell inner membrane. Multidrug efflux pump that functions probably as a Na(+)/drug antiporter. In Escherichia coli O139:H28 (strain E24377A / ETEC), this protein is Multidrug resistance protein MdtK.